Here is a 592-residue protein sequence, read N- to C-terminus: MGKRPIEDDAVASSELSRKKSKKEKSGKSKKSVIGEGADTNGHAPAAETTVDGSENEALSKAERKAAKKAKKEAKEASKAGKADAPTVENDEEAAKAARKAARKAEKKKLKEAEKTASSAPTEASSVPAQTLSSSNAGSYTEHTELAQLPQSEIDAFLTKNTMTIEDPKPAARKLRPIVNFKYLPVTDESQRAPFAGFTAPTPIQAATWPFLLSGRDMVGVAETGSGKTLAFGVPCVRAILSLPKDKRKGIKAVIVSPTRELAVQIYDQLVALAHPAGLSVVCVYGGVPKDPQVAACRKAHIVVATPGRLNDLIGDGSADLSNADYVVLDEADRMLDKGFEEPIRQIISQTPKKRQTLMFTATWPPSVRDLASTFMVSPVRITIGDNQSGELRANVRIKQLVEVLDPHAKEQRLLQLLKQYQSGKNKDDRILVFCLYKKEAMRIENFIRMKGFRVGGIHGDLSQEKRSASLAAFKEGQVPLLVATDVAARGLDIPAVKLVINVTFPLTAEDYVHRIGRTGRAGKEGLAITFFTEHDKGLSGSLINVLKAANQEVPEELLKFGTTVKKKEHGAYGAFYKDVDNTKAATKITFD.

Residues 1–146 are disordered; that stretch reads MGKRPIEDDA…AGSYTEHTEL (146 aa). Over residues 19–31 the composition is skewed to basic residues; sequence KKSKKEKSGKSKK. Residues 73-82 are compositionally biased toward basic and acidic residues; it reads EAKEASKAGK. Over residues 97-108 the composition is skewed to basic residues; sequence AARKAARKAEKK. A compositionally biased stretch (polar residues) spans 116-141; it reads TASSAPTEASSVPAQTLSSSNAGSYT. The Q motif signature appears at 179–206; sequence VNFKYLPVTDESQRAPFAGFTAPTPIQA. One can recognise a Helicase ATP-binding domain in the interval 209–382; it reads WPFLLSGRDM…STFMVSPVRI (174 aa). Residue 222-229 coordinates ATP; sequence AETGSGKT. The short motif at 330 to 333 is the DEAD box element; that stretch reads DEAD. One can recognise a Helicase C-terminal domain in the interval 413–562; that stretch reads RLLQLLKQYQ…EVPEELLKFG (150 aa).

Belongs to the DEAD box helicase family. DDX5/DBP2 subfamily.

It is found in the nucleus. It localises to the nucleolus. The enzyme catalyses ATP + H2O = ADP + phosphate + H(+). In terms of biological role, ATP-dependent RNA helicase required for 60S ribosomal subunit synthesis. Involved in efficient pre-rRNA processing, predominantly at site A3, which is necessary for the normal formation of 25S and 5.8S rRNAs. This chain is ATP-dependent RNA helicase DBP3 (DBP3), found in Phaeosphaeria nodorum (strain SN15 / ATCC MYA-4574 / FGSC 10173) (Glume blotch fungus).